Here is a 254-residue protein sequence, read N- to C-terminus: YWVGPFYVGFFGVTAAFFIMLGTALIIWGAALGPTWNIWQISIAPPDLSYGLGLAPLAKGGLWQIITVCAIGAFGSWALREVEISRKLGIGLHVPAAFSVAIFAYVTLEVIRPLLMGAWGNGFPYGIMSHLDWVSNTGYAYLNFEYNPMHMVAVTLFFTTTLALALHGSLVLAAINPPAGETVKFAEHEDTFFRDFIGYSIGTLGIHRLGLFLALGAGFASATCILLSGPFWTQGWPSWWGWWLHLPIWQFGGH.

3 helical membrane passes run 10–32 (FFGV…GAAL), 60–88 (GGLW…SRKL), and 93–115 (HVPA…RPLL). Positions 130 and 150 each coordinate (7R,8Z)-bacteriochlorophyll b. The helical transmembrane segment at 148–175 (PMHMVAVTLFFTTTLALALHGSLVLAAI) threads the bilayer. Fe cation is bound at residue His-167. A ubiquinone is bound at residue Phe-193. The helical transmembrane segment at 202-227 (GTLGIHRLGLFLALGAGFASATCILL) threads the bilayer. His-207 contributes to the Fe cation binding site.

Belongs to the reaction center PufL/M/PsbA/D family. As to quaternary structure, reaction center is composed of four bacteriochlorophylls, two bacteriopheophytins, two ubiquinones, one iron, and two highly hydrophobic polypeptide chains (designated L and M).

It is found in the cell inner membrane. Functionally, the reaction center is a membrane-bound complex that mediates the initial photochemical event in the electron transfer process of photosynthesis. In Acidiphilium organovorum, this protein is Reaction center protein L chain (pufL).